A 121-amino-acid polypeptide reads, in one-letter code: NAD(P)H-quinone oxidoreductase subunit M (121 aa).

The protein belongs to the complex I NdhM subunit family. In terms of assembly, NDH-1 can be composed of about 15 different subunits; different subcomplexes with different compositions have been identified which probably have different functions.

It is found in the cellular thylakoid membrane. The enzyme catalyses a plastoquinone + NADH + (n+1) H(+)(in) = a plastoquinol + NAD(+) + n H(+)(out). It carries out the reaction a plastoquinone + NADPH + (n+1) H(+)(in) = a plastoquinol + NADP(+) + n H(+)(out). In terms of biological role, NDH-1 shuttles electrons from an unknown electron donor, via FMN and iron-sulfur (Fe-S) centers, to quinones in the respiratory and/or the photosynthetic chain. The immediate electron acceptor for the enzyme in this species is believed to be plastoquinone. Couples the redox reaction to proton translocation, and thus conserves the redox energy in a proton gradient. Cyanobacterial NDH-1 also plays a role in inorganic carbon-concentration. The sequence is that of NAD(P)H-quinone oxidoreductase subunit M from Synechococcus sp. (strain JA-2-3B'a(2-13)) (Cyanobacteria bacterium Yellowstone B-Prime).